Reading from the N-terminus, the 297-residue chain is MKLYDLKAQGLDLQENIPLSRYTFTQTGGPAEYLAFPKTLAELKELLAAAKEDQLPITVIGNASNLIIRDKGIKGLVIILTEMKEIKVEADKVHAQAGARIIDTSFAAGEAGLSGLEFAAGIPGSVGGAVFMNAGAYGGETKDCLESATVVTRDGEVKTYTNAELHFSYRHSLLQENDEIVIAATFALKAGDKATILDQMNYLNALRSYKQPLEYPSCGSVFKRPTGHFVGPMLIKAGLQGKQIGGAQVSTKHAGFIVNKGGATATDYLNLIHYIQKTIKEKDGIALQTEVRIIGEE.

An FAD-binding PCMH-type domain is found at 26–191 (QTGGPAEYLA…IAATFALKAG (166 aa)). Residue Arg170 is part of the active site. Residue Ser220 is the Proton donor of the active site. The active site involves Glu290.

It belongs to the MurB family. FAD serves as cofactor.

The protein localises to the cytoplasm. It catalyses the reaction UDP-N-acetyl-alpha-D-muramate + NADP(+) = UDP-N-acetyl-3-O-(1-carboxyvinyl)-alpha-D-glucosamine + NADPH + H(+). It functions in the pathway cell wall biogenesis; peptidoglycan biosynthesis. Its function is as follows. Cell wall formation. In Lactobacillus delbrueckii subsp. bulgaricus (strain ATCC 11842 / DSM 20081 / BCRC 10696 / JCM 1002 / NBRC 13953 / NCIMB 11778 / NCTC 12712 / WDCM 00102 / Lb 14), this protein is UDP-N-acetylenolpyruvoylglucosamine reductase.